The chain runs to 188 residues: Elongation factor P (188 aa).

K34 carries the N6-(3,6-diaminohexanoyl)-5-hydroxylysine modification.

It belongs to the elongation factor P family. May be beta-lysylated on the epsilon-amino group of Lys-34 by the combined action of EpmA and EpmB, and then hydroxylated on the C5 position of the same residue by EpmC (if this protein is present). Lysylation is critical for the stimulatory effect of EF-P on peptide-bond formation. The lysylation moiety may extend toward the peptidyltransferase center and stabilize the terminal 3-CCA end of the tRNA. Hydroxylation of the C5 position on Lys-34 may allow additional potential stabilizing hydrogen-bond interactions with the P-tRNA.

It is found in the cytoplasm. It functions in the pathway protein biosynthesis; polypeptide chain elongation. In terms of biological role, involved in peptide bond synthesis. Alleviates ribosome stalling that occurs when 3 or more consecutive Pro residues or the sequence PPG is present in a protein, possibly by augmenting the peptidyl transferase activity of the ribosome. Modification of Lys-34 is required for alleviation. The polypeptide is Elongation factor P (Methylococcus capsulatus (strain ATCC 33009 / NCIMB 11132 / Bath)).